We begin with the raw amino-acid sequence, 688 residues long: ATP-dependent RNA helicase ded1 (688 aa).

Polar residues-rich tracts occupy residues 1-15 (MADQ…LSID) and 55-67 (GLNN…NNNY). Residues 1–170 (MADQLSSGMG…TPDDPSKQHT (170 aa)) are disordered. Residues 88 to 102 (GFEGQQGAGWGGPRP) are compositionally biased toward gly residues. Over residues 103–114 (QGGFNPNAYRGN) the composition is skewed to low complexity. Over residues 115–129 (AGAGAGAGAGGGGGS) the composition is skewed to gly residues. The short motif at 194–222 (LTFSNPPLDNHLISNIQLARYNVPTPVQK) is the Q motif element. The Helicase ATP-binding domain maps to 225–416 (IPIVMGGRDL…RDFLKDYIFL (192 aa)). Residue 238 to 245 (AQTGSGKT) coordinates ATP. The short motif at 360-363 (DEAD) is the DEAD box element. The Helicase C-terminal domain occupies 427–587 (NITQKVEYVE…EVPAFLETIA (161 aa)). A disordered region spans residues 590 to 615 (SSFGGGRGGRGGGRGGGRGRTQTADY). Residues 592–608 (FGGGRGGRGGGRGGGRG) are compositionally biased toward gly residues.

It belongs to the DEAD box helicase family. DDX3/DED1 subfamily.

The protein localises to the cytoplasm. It carries out the reaction ATP + H2O = ADP + phosphate + H(+). In terms of biological role, ATP-binding RNA helicase involved in translation initiation. Remodels RNA in response to ADP and ATP concentrations by facilitating disruption, but also formation of RNA duplexes. This Neurospora crassa (strain ATCC 24698 / 74-OR23-1A / CBS 708.71 / DSM 1257 / FGSC 987) protein is ATP-dependent RNA helicase ded1 (drh-9).